A 585-amino-acid polypeptide reads, in one-letter code: MDNNKKQVIPRSQYRRKRREYFHNVEREERIRREKIEKENQAKREQHQTKVNEERVKDNLRKARIEKLTQEEIHQQRDDKSYKQKTLNQNNQMNKSKDDDNKIGEESLHDVRVSSDTSTLPHQNKSIKDYDDSGNESKQHTKLTSKESMLGVNSNHTEQDSRSTQPYSSKHSYSQPKDKDNDNTQQAQFLKKEDKQRNRAENIKKVNEFKQLVVAFFKEHWPKMLIIIGIIVLLLILNAIFTTVNKNDHTNDSAFNGTAKDETTAMKIAENSVKSVVTVENDLSNDTTVSDNKNESDNEIGSGVVYKKVGDSIYIFTNAHVVGDQEKQKVTYGNDKSVTGKVIGKDKWSDLAVVKAKVADENIKPMTMGDSNNIKLAEPILVIGNPLGTDFKGSVSQGIVSGLNRHVPVDIDKNDNYDALMKAFQIDAPVNPGNSGGAVVDRDGRLIGIVSLKIDMHNVEGMAFAIPINDVRKIAKELEHKGKVNYPNTEIKIKNVGDLDDSERNAINLPAKVNHGVLIGEVKENGLGDKAGLKKGDVIVELDGKKIEDNLRYRQVIYSHYDDQKTITAKIYRNGAEKNIKIKLK.

Residues 1-184 are disordered; it reads MDNNKKQVIP…QPKDKDNDNT (184 aa). Basic and acidic residues predominate over residues 21–82; it reads YFHNVEREER…IHQQRDDKSY (62 aa). Polar residues predominate over residues 84–94; the sequence is QKTLNQNNQMN. Over residues 95 to 113 the composition is skewed to basic and acidic residues; that stretch reads KSKDDDNKIGEESLHDVRV. Positions 114 to 124 are enriched in polar residues; sequence SSDTSTLPHQN. Residues 126–139 show a composition bias toward basic and acidic residues; it reads SIKDYDDSGNESKQ. Positions 151-175 are enriched in polar residues; the sequence is GVNSNHTEQDSRSTQPYSSKHSYSQ. Residues 224 to 244 form a helical membrane-spanning segment; it reads MLIIIGIIVLLLILNAIFTTV. Residues His-320, Asp-350, and Ser-435 each act as charge relay system in the active site. The PDZ domain occupies 516 to 575; it reads GVLIGEVKENGLGDKAGLKKGDVIVELDGKKIEDNLRYRQVIYSHYDDQKTITAKIYRNG.

It belongs to the peptidase S1C family.

It is found in the cell membrane. The polypeptide is Serine protease HtrA-like (Staphylococcus epidermidis (strain ATCC 35984 / DSM 28319 / BCRC 17069 / CCUG 31568 / BM 3577 / RP62A)).